Here is a 218-residue protein sequence, read N- to C-terminus: Probable nicotinate-nucleotide adenylyltransferase (218 aa).

Belongs to the NadD family.

It carries out the reaction nicotinate beta-D-ribonucleotide + ATP + H(+) = deamido-NAD(+) + diphosphate. It functions in the pathway cofactor biosynthesis; NAD(+) biosynthesis; deamido-NAD(+) from nicotinate D-ribonucleotide: step 1/1. Catalyzes the reversible adenylation of nicotinate mononucleotide (NaMN) to nicotinic acid adenine dinucleotide (NaAD). The sequence is that of Probable nicotinate-nucleotide adenylyltransferase from Halorhodospira halophila (strain DSM 244 / SL1) (Ectothiorhodospira halophila (strain DSM 244 / SL1)).